The following is a 520-amino-acid chain: AAA-ATPase At5g57480 (520 aa).

Positions 1 to 24 (MKEYWTSLASLLGVLAFCQSLMQS) are cleaved as a signal peptide. 244–251 (GPPGTGKS) is an ATP binding site. 2 disordered regions span residues 307–340 (KKNS…EEGG) and 467–520 (NVKD…TRED). Over residues 328 to 340 (SGSGSGGSGEEGG) the composition is skewed to gly residues. A compositionally biased stretch (acidic residues) spans 497-512 (QNEDEDHDEEEIELED).

Belongs to the AAA ATPase family. BCS1 subfamily. Mg(2+) serves as cofactor.

The enzyme catalyses ATP + H2O = ADP + phosphate + H(+). This Arabidopsis thaliana (Mouse-ear cress) protein is AAA-ATPase At5g57480.